The primary structure comprises 153 residues: D-erythrulose-4-phosphate isomerase 1 (153 aa).

The Proton acceptor role is filled by cysteine 69.

It belongs to the LacAB/RpiB family.

The catalysed reaction is D-erythrulose 4-phosphate = D-erythrose 4-phosphate. It functions in the pathway carbohydrate metabolism; erythritol degradation. Its pathway is carbohydrate metabolism; D-threitol degradation. In terms of biological role, catalyzes the isomerization of D-erythrulose-4P to D-erythrose-4P. Involved in the degradation pathways of erythritol and D-threitol, that allow M.smegmatis to grow on these compounds as the sole carbon source. The chain is D-erythrulose-4-phosphate isomerase 1 from Mycolicibacterium smegmatis (strain ATCC 700084 / mc(2)155) (Mycobacterium smegmatis).